We begin with the raw amino-acid sequence, 499 residues long: DAZ protein 1 (499 aa).

The interval 1-29 (MMSPPLRYQKDQQNQQHQQNQSQQAAHQM) is disordered. The segment covering 12–28 (QQNQQHQQNQSQQAAHQ) has biased composition (low complexity). An RRM domain is found at 66-144 (PNRIFVGGFP…SRKLNLGPAI (79 aa)). The segment covering 195–224 (FVYPPLRSQDQSRQQSEQQTTPQNSPTNLQ) has biased composition (low complexity). Disordered regions lie at residues 195–304 (FVYP…NNGG) and 406–499 (YPGN…TKNN). A DAZ domain is found at 214–236 (TTPQNSPTNLQHQQSPQVFFGGD). Positions 251–262 (EKSEVSPEKHES) are enriched in basic and acidic residues. The span at 263–279 (VSPQPLLPNQNVLNTQY) shows a compositional bias: polar residues. The span at 280–304 (SQGQQQWNSNVQQQQQQQMDSNNGG) shows a compositional bias: low complexity. A compositionally biased stretch (polar residues) spans 406-425 (YPGNFSQQHTMGNNENTFSL). Over residues 438 to 447 (KPSECQDKKT) the composition is skewed to basic and acidic residues. The segment covering 480 to 499 (LSPLSASLQSLAISSPTKNN) has biased composition (low complexity).

The protein belongs to the RRM DAZ family. Germline specific. More strongly expressed during oogenesis than during spermatogenesis. During the larval stages, it is more abundant at the distal region than the proximal region of the gonad. In young adult hermaphrodites, it is expressed at a very low level in the distal mitotic region of the gonad, and begins to accumulate in the meiotic transition zone. Highly expressed in the proximal pachytene region. Not expressed in mature oocytes. Not expressed in the spermatheca. Weakly or not expressed in the germline of adult males.

Functionally, RNA-binding protein that plays a central role in oogenesis, but not for spermatogenesis. Required for meiotic entry and germline differentiation, at the pachytene stage of meiosis I of female germline regardless of the sex of the soma. May act by regulating translation of specific mRNAs, possibly by binding to their 3'-UTR. The protein is DAZ protein 1 (daz-1) of Caenorhabditis elegans.